Consider the following 469-residue polypeptide: Citrate synthase, mitochondrial (469 aa).

The transit peptide at 1 to 30 (MSFLSVSRLAPKLLNSKNATYFLVAARNAS) directs the protein to the mitochondrion. Residues His304 and His350 contribute to the active site. An oxaloacetate-binding site is contributed by Arg359. Asp405 is an active-site residue. Residues Arg431 and Arg451 each coordinate oxaloacetate.

The protein belongs to the citrate synthase family. In terms of assembly, homodimer.

The protein localises to the mitochondrion matrix. The catalysed reaction is oxaloacetate + acetyl-CoA + H2O = citrate + CoA + H(+). Its pathway is carbohydrate metabolism; tricarboxylic acid cycle; isocitrate from oxaloacetate: step 1/2. Key enzyme of the Krebs tricarboxylic acid cycle which catalyzes the synthesis of citrate from acetyl coenzyme A and oxaloacetate. In Katsuwonus pelamis (Skipjack tuna), this protein is Citrate synthase, mitochondrial (cs).